A 206-amino-acid chain; its full sequence is MLKTIRKHGITLALFAAGSTGLTAAINQMTKTTIAEQASLQQKALFDQVLPAERYNNALAQSCYLVTAPELGKGEHRVYIAKQDDKPVAAVLEATAPDGYSGAIQLLVGADFNGTVLGTRVTEHHETPGLGDKIELRLSDWITHFAGKKISGADDAHWAVKKDGGDFDQFTGATITPRAVVNAVKRAGLYAQTLPAQLSQLPACGE.

Residues 9–29 traverse the membrane as a helical segment; that stretch reads GITLALFAAGSTGLTAAINQM. Thr-174 is subject to FMN phosphoryl threonine.

This sequence belongs to the RnfG family. The complex is composed of six subunits: RsxA, RsxB, RsxC, RsxD, RsxE and RsxG. The cofactor is FMN.

The protein resides in the cell inner membrane. In terms of biological role, part of a membrane-bound complex that couples electron transfer with translocation of ions across the membrane. Required to maintain the reduced state of SoxR. Probably transfers electron from NAD(P)H to SoxR. This Escherichia coli (strain K12) protein is Ion-translocating oxidoreductase complex subunit G.